The following is a 266-amino-acid chain: Hydroxyethylthiazole kinase (266 aa).

Substrate is bound at residue M43. Residues R119 and T166 each coordinate ATP. G193 contacts substrate.

The protein belongs to the Thz kinase family. It depends on Mg(2+) as a cofactor.

It catalyses the reaction 5-(2-hydroxyethyl)-4-methylthiazole + ATP = 4-methyl-5-(2-phosphooxyethyl)-thiazole + ADP + H(+). Its pathway is cofactor biosynthesis; thiamine diphosphate biosynthesis; 4-methyl-5-(2-phosphoethyl)-thiazole from 5-(2-hydroxyethyl)-4-methylthiazole: step 1/1. In terms of biological role, catalyzes the phosphorylation of the hydroxyl group of 4-methyl-5-beta-hydroxyethylthiazole (THZ). The sequence is that of Hydroxyethylthiazole kinase from Methanococcus vannielii (strain ATCC 35089 / DSM 1224 / JCM 13029 / OCM 148 / SB).